Reading from the N-terminus, the 246-residue chain is Probable transcriptional regulatory protein RB5500 (246 aa).

It belongs to the TACO1 family.

Its subcellular location is the cytoplasm. The chain is Probable transcriptional regulatory protein RB5500 from Rhodopirellula baltica (strain DSM 10527 / NCIMB 13988 / SH1).